A 512-amino-acid polypeptide reads, in one-letter code: Spermatocyte protein spe-8 (512 aa).

The tract at residues 1 to 85 (MRSKSSEGDL…PKPSSDNNNS (85 aa)) is disordered. Residues 15-41 (TQSREDKETTATYSEDTKPETQKERNA) show a composition bias toward basic and acidic residues. A compositionally biased stretch (pro residues) spans 68 to 78 (EAPPPPPPPKP). One can recognise an SH2 domain in the interval 114–205 (FYHGFMGRNE…YEGMTLICGL (92 aa)). Positions 217 to 485 (VTLNKKLGEG…KEEVGFHEIE (269 aa)) constitute a Protein kinase domain. ATP contacts are provided by residues 223–231 (LGEGQFGEV) and Lys250. The active-site Proton acceptor is the Asp344.

It belongs to the protein kinase superfamily. Tyr protein kinase family. Fes/fps subfamily. Expression is restricted to male germline.

Its subcellular location is the cell membrane. It is found in the cytoplasm. It carries out the reaction L-tyrosyl-[protein] + ATP = O-phospho-L-tyrosyl-[protein] + ADP + H(+). Functionally, probable non-receptor tyrosine-protein kinase which plays a role in spermatid activation (spermiogenesis) in hermaphrodites. This chain is Spermatocyte protein spe-8, found in Caenorhabditis elegans.